Consider the following 387-residue polypeptide: Succinyl-diaminopimelate desuccinylase (387 aa).

Zn(2+) is bound at residue His-74. Asp-76 is a catalytic residue. Asp-107 is a binding site for Zn(2+). Glu-142 functions as the Proton acceptor in the catalytic mechanism. Zn(2+)-binding residues include Glu-143, Glu-171, and His-360.

It belongs to the peptidase M20A family. DapE subfamily. In terms of assembly, homodimer. The cofactor is Zn(2+). Requires Co(2+) as cofactor.

It carries out the reaction N-succinyl-(2S,6S)-2,6-diaminopimelate + H2O = (2S,6S)-2,6-diaminopimelate + succinate. It participates in amino-acid biosynthesis; L-lysine biosynthesis via DAP pathway; LL-2,6-diaminopimelate from (S)-tetrahydrodipicolinate (succinylase route): step 3/3. Catalyzes the hydrolysis of N-succinyl-L,L-diaminopimelic acid (SDAP), forming succinate and LL-2,6-diaminopimelate (DAP), an intermediate involved in the bacterial biosynthesis of lysine and meso-diaminopimelic acid, an essential component of bacterial cell walls. This is Succinyl-diaminopimelate desuccinylase from Rhodopseudomonas palustris (strain ATCC BAA-98 / CGA009).